A 141-amino-acid polypeptide reads, in one-letter code: MTIIIGADAHGVELKEVIRQHLTSLGKEIIDLTDTSKDFVDNTLAIVAKVNQKEDNLGIMVDAYGVGPFMVATKVKGMIAAEVSDERSAYMTRAHNNARMITLGSEIVGPGVAKHIVEGFVDGTYDAGRHQIRVDMLNKMC.

The protein belongs to the LacAB/RpiB family. As to quaternary structure, heteromultimeric protein consisting of LacA and LacB.

It catalyses the reaction aldehydo-D-galactose 6-phosphate = keto-D-tagatose 6-phosphate. Its pathway is carbohydrate metabolism; D-galactose 6-phosphate degradation; D-tagatose 6-phosphate from D-galactose 6-phosphate: step 1/1. This is Galactose-6-phosphate isomerase subunit LacA from Streptococcus agalactiae serotype Ia (strain ATCC 27591 / A909 / CDC SS700).